Consider the following 181-residue polypeptide: UPF0397 protein str0306 (181 aa).

The next 5 helical transmembrane spans lie at 11–31, 45–65, 72–92, 109–129, and 147–167; these read ATGI…IPIF, LFSV…GHAL, GNIS…IGLF, IWFN…VTPI, and FVAG…LLAI.

This sequence belongs to the UPF0397 family.

It is found in the cell membrane. In Streptococcus thermophilus (strain CNRZ 1066), this protein is UPF0397 protein str0306.